Reading from the N-terminus, the 242-residue chain is Outer membrane protein class 4 (242 aa).

The first 22 residues, 1-22, serve as a signal peptide directing secretion; the sequence is MTKQLKLSALFVALLASGTAVA. A run of 7 repeats spans residues 69–70, 71–72, 73–74, 75–76, 77–78, 79–80, and 81–82. Residues 69–82 form a 7 X 2 AA tandem repeats of X-P region; it reads APEPEPEPEPAPAP. The OmpA-like domain maps to 92–229; sequence YVDETISLSA…RVDVKIRSIV (138 aa). Cys-191 and Cys-214 form a disulfide bridge.

The protein belongs to the outer membrane OOP (TC 1.B.6) superfamily.

It localises to the cell outer membrane. This is Outer membrane protein class 4 (rmpM) from Neisseria meningitidis serogroup A / serotype 4A (strain DSM 15465 / Z2491).